A 278-amino-acid chain; its full sequence is Probable endonuclease LCL3 (278 aa).

Residues 15 to 37 (FSSDVVLLSLLISGSTLGAIAGY) form a helical membrane-spanning segment. The TNase-like domain occupies 58–263 (RWMYGKVTAV…KAKKRGLWRQ (206 aa)). R154 is an active-site residue. D159 is a Ca(2+) binding site. Residues E162 and R202 contribute to the active site.

This sequence belongs to the LCL3 family.

Its subcellular location is the mitochondrion. The protein localises to the membrane. This is Probable endonuclease LCL3 (LCL3) from Vanderwaltozyma polyspora (strain ATCC 22028 / DSM 70294 / BCRC 21397 / CBS 2163 / NBRC 10782 / NRRL Y-8283 / UCD 57-17) (Kluyveromyces polysporus).